The following is a 329-amino-acid chain: Phenylalanine--tRNA ligase alpha subunit (329 aa).

Glu246 is a binding site for Mg(2+).

The protein belongs to the class-II aminoacyl-tRNA synthetase family. Phe-tRNA synthetase alpha subunit type 1 subfamily. In terms of assembly, tetramer of two alpha and two beta subunits. Mg(2+) is required as a cofactor.

It is found in the cytoplasm. It carries out the reaction tRNA(Phe) + L-phenylalanine + ATP = L-phenylalanyl-tRNA(Phe) + AMP + diphosphate + H(+). This Helicobacter hepaticus (strain ATCC 51449 / 3B1) protein is Phenylalanine--tRNA ligase alpha subunit.